Reading from the N-terminus, the 80-residue chain is MCGYYGNYYGGRGYGCCGYGGLGYGYGGLGCGLGSYYGCGYRRLGCGYGCGYGYGYGSRSLCGCGYGYGSGYGSGFGYYY.

This sequence belongs to the KRTAP type 6 family. As to quaternary structure, interacts with hair keratins.

Functionally, in the hair cortex, hair keratin intermediate filaments are embedded in an interfilamentous matrix, consisting of hair keratin-associated proteins (KRTAP), which are essential for the formation of a rigid and resistant hair shaft through their extensive disulfide bond cross-linking with abundant cysteine residues of hair keratins. The matrix proteins include the high-sulfur and high-glycine-tyrosine keratins. The chain is Keratin-associated protein 6-1 (KRTAP6-1) from Oryctolagus cuniculus (Rabbit).